Reading from the N-terminus, the 144-residue chain is MKIATKYHGNIDIDEKDIVRFEQGIPGFLEEKQFVLLPLEDTPFIILQSVNTPALGFVLIEPFSYFPTYEIELDDNTLEQLQITGEQDVALYVILTVAEPFDDTTANLQAPIVINVNKRLGKQVILTNTNYKTKHRLFPEKVAK.

It belongs to the FliW family. As to quaternary structure, interacts with translational regulator CsrA and flagellin(s).

It localises to the cytoplasm. In terms of biological role, acts as an anti-CsrA protein, binds CsrA and prevents it from repressing translation of its target genes, one of which is flagellin. Binds to flagellin and participates in the assembly of the flagellum. The polypeptide is Flagellar assembly factor FliW (Geobacillus sp. (strain WCH70)).